The chain runs to 309 residues: tRNA uridine(34) hydroxylase (309 aa).

Residues 130-224 (SDPDTIVIDT…YLEEVPQEES (95 aa)) form the Rhodanese domain. The Cysteine persulfide intermediate role is filled by cysteine 184.

It belongs to the TrhO family.

The catalysed reaction is uridine(34) in tRNA + AH2 + O2 = 5-hydroxyuridine(34) in tRNA + A + H2O. Functionally, catalyzes oxygen-dependent 5-hydroxyuridine (ho5U) modification at position 34 in tRNAs. The protein is tRNA uridine(34) hydroxylase of Rhizobium etli (strain ATCC 51251 / DSM 11541 / JCM 21823 / NBRC 15573 / CFN 42).